Reading from the N-terminus, the 116-residue chain is Tyrosine-protein phosphatase 20 (116 aa).

The Tyrosine-protein phosphatase domain maps to 1 to 116; that stretch reads WMMIVEQKCR…EIGGDAPMVV (116 aa). Asp-84 serves as a coordination point for substrate.

This sequence belongs to the protein-tyrosine phosphatase family.

The catalysed reaction is O-phospho-L-tyrosyl-[protein] + H2O = L-tyrosyl-[protein] + phosphate. The polypeptide is Tyrosine-protein phosphatase 20 (STY-20) (Styela plicata (Wrinkled sea squirt)).